The primary structure comprises 257 residues: uncharacterized protein (257 aa).

This is an uncharacterized protein from Mycobacterium tuberculosis (strain CDC 1551 / Oshkosh).